Here is a 462-residue protein sequence, read N- to C-terminus: A-type ATP synthase subunit B (462 aa).

It belongs to the ATPase alpha/beta chains family. Has multiple subunits with at least A(3), B(3), C, D, E, F, H, I and proteolipid K(x).

The protein localises to the cell membrane. Its function is as follows. Component of the A-type ATP synthase that produces ATP from ADP in the presence of a proton gradient across the membrane. The B chain is a regulatory subunit. This Cenarchaeum symbiosum (strain A) protein is A-type ATP synthase subunit B.